Consider the following 39-residue polypeptide: Omega-theraphotoxin-Ba1b (39 aa).

3 disulfides stabilise this stretch: Cys-4/Cys-17, Cys-8/Cys-31, and Cys-25/Cys-36.

This sequence belongs to the neurotoxin 12 (Hwtx-2) family. 06 (TXP1) subfamily. As to expression, expressed by the venom gland.

The protein resides in the secreted. Inhibits voltage-gated calcium channels (Cav) in rat cerebellar granule cells. Has insecticidal activity to crickets (Acheta domesticus). Is not toxic to mice. The protein is Omega-theraphotoxin-Ba1b of Brachypelma albiceps (Mexican golden redrump tarantula).